The sequence spans 268 residues: Ribosomal RNA small subunit methyltransferase A (268 aa).

6 residues coordinate S-adenosyl-L-methionine: asparagine 18, leucine 20, glycine 45, glutamate 66, aspartate 91, and asparagine 112.

It belongs to the class I-like SAM-binding methyltransferase superfamily. rRNA adenine N(6)-methyltransferase family. RsmA subfamily.

It localises to the cytoplasm. The enzyme catalyses adenosine(1518)/adenosine(1519) in 16S rRNA + 4 S-adenosyl-L-methionine = N(6)-dimethyladenosine(1518)/N(6)-dimethyladenosine(1519) in 16S rRNA + 4 S-adenosyl-L-homocysteine + 4 H(+). Specifically dimethylates two adjacent adenosines (A1518 and A1519) in the loop of a conserved hairpin near the 3'-end of 16S rRNA in the 30S particle. May play a critical role in biogenesis of 30S subunits. The sequence is that of Ribosomal RNA small subunit methyltransferase A from Vibrio vulnificus (strain CMCP6).